Consider the following 76-residue polypeptide: Liver-expressed antimicrobial peptide 2 (76 aa).

The first 22 residues, 1-22 (MLQLKLFAVLLTCLLLLGQVNS), serve as a signal peptide directing secretion. Positions 23-36 (SPVPEVSSAKRSRR) are excised as a propeptide. Intrachain disulfides connect Cys-53-Cys-64 and Cys-59-Cys-69.

It belongs to the LEAP2 family.

It is found in the secreted. In terms of biological role, has an antimicrobial activity. This chain is Liver-expressed antimicrobial peptide 2 (Leap2), found in Mus musculus (Mouse).